Reading from the N-terminus, the 309-residue chain is Olfactory receptor 2AP1 (309 aa).

Topologically, residues 1-23 (MKNKTVLTEFILLGLTDVPELQV) are extracellular. The N-linked (GlcNAc...) asparagine glycan is linked to asparagine 3. Residues 24–47 (AVFTFLFLAYLLSILGNLTILILT) traverse the membrane as a helical segment. Residues 48 to 55 (LLDSHLQT) are Cytoplasmic-facing. The chain crosses the membrane as a helical span at residues 56–77 (PMYFFLRNFSFLEISFTNIFIP). Over 78 to 98 (RVLISITTGNKSISFAGCFTQ) the chain is Extracellular. The N-linked (GlcNAc...) asparagine glycan is linked to asparagine 87. A disulfide bridge connects residues cysteine 95 and cysteine 187. The helical transmembrane segment at 99-118 (YFFAMFLGATEFYLLAAMSY) threads the bilayer. The Cytoplasmic segment spans residues 119 to 137 (DRYVAICKPLHYTTIMSSR). Residues 138 to 156 (ICIQLIFCSWLGGLMAIIP) traverse the membrane as a helical segment. Topologically, residues 157–193 (TITLMSQQDFCASNRLNHYFCDYEPLLELSCSDTSLI) are extracellular. The chain crosses the membrane as a helical span at residues 194 to 217 (EKVVFLVASVTLVVTLVLVILSYA). The Cytoplasmic portion of the chain corresponds to 218–234 (FIIKTILKLPSAQQRTK). A helical membrane pass occupies residues 235–257 (AFSTCSSHMIVISLSYGSCMFMY). The Extracellular segment spans residues 258–270 (INPSAKEGDTFNK). The chain crosses the membrane as a helical span at residues 271-290 (GVALLITSVAPLLNPFIYTL). At 291-309 (RNQQVKQPFKDMVKKLLNL) the chain is on the cytoplasmic side.

The protein belongs to the G-protein coupled receptor 1 family.

It is found in the cell membrane. Odorant receptor. In Homo sapiens (Human), this protein is Olfactory receptor 2AP1 (OR2AP1).